The chain runs to 178 residues: Mediator of RNA polymerase II transcription subunit 21 (178 aa).

Residues 36–91 form a disordered region; the sequence is DDDDVNSYSNMAANAPLPQSQQQRQQQKKQQEPQQEIEQPQQQSNPESKSISPPKE. Over residues 67–85 the composition is skewed to low complexity; sequence EPQQEIEQPQQQSNPESKS. Residues 128-169 adopt a coiled-coil conformation; sequence NEQMNLINELSDKLQAIEEERIQKIKEKDNLLNLLESMIKEV.

It belongs to the Mediator complex subunit 21 family. As to quaternary structure, component of the Mediator complex.

The protein resides in the nucleus. In terms of biological role, component of the Mediator complex, a coactivator involved in the regulated transcription of nearly all RNA polymerase II-dependent genes. Mediator functions as a bridge to convey information from gene-specific regulatory proteins to the basal RNA polymerase II transcription machinery. Mediator is recruited to promoters by direct interactions with regulatory proteins and serves as a scaffold for the assembly of a functional preinitiation complex with RNA polymerase II and the general transcription factors. This Candida albicans (strain SC5314 / ATCC MYA-2876) (Yeast) protein is Mediator of RNA polymerase II transcription subunit 21 (SRB7).